The following is a 225-amino-acid chain: Cyclin-dependent kinase inhibitor 3 (225 aa).

2 disordered regions span residues 47-94 (AAAA…QRRR) and 130-169 (ERKSLKPNSCSREVAAEHAGEHKHNPAAAAAAGRRPPLSP). Residues 55–67 (CRRRHRRGGRRGC) are compositionally biased toward basic residues. Residues 71–82 (GAGSARACGARS) are compositionally biased toward low complexity. Residues 143 to 153 (VAAEHAGEHKH) are compositionally biased toward basic and acidic residues.

It belongs to the CDI family. ICK/KRP subfamily.

The sequence is that of Cyclin-dependent kinase inhibitor 3 (KRP3) from Oryza sativa subsp. japonica (Rice).